A 193-amino-acid polypeptide reads, in one-letter code: Adenylate kinase (193 aa).

10–18 (GVPGVGGTT) provides a ligand contact to ATP.

Belongs to the archaeal adenylate kinase family. As to quaternary structure, monomer.

It localises to the cytoplasm. The enzyme catalyses AMP + ATP = 2 ADP. This Methanococcus aeolicus (strain ATCC BAA-1280 / DSM 17508 / OCM 812 / Nankai-3) protein is Adenylate kinase.